A 205-amino-acid polypeptide reads, in one-letter code: Cytochrome c biogenesis ATP-binding export protein CcmA (205 aa).

The ABC transporter domain maps to 2–204; that stretch reads LEVSNLTAIR…SPKLRKIKLG (203 aa). Position 34 to 41 (34 to 41) interacts with ATP; that stretch reads GRNGTGKT.

Belongs to the ABC transporter superfamily. CcmA exporter (TC 3.A.1.107) family. The complex is composed of two ATP-binding proteins (CcmA) and two transmembrane proteins (CcmB).

It localises to the cell inner membrane. It carries out the reaction heme b(in) + ATP + H2O = heme b(out) + ADP + phosphate + H(+). Its function is as follows. Part of the ABC transporter complex CcmAB involved in the biogenesis of c-type cytochromes; once thought to export heme, this seems not to be the case, but its exact role is uncertain. Responsible for energy coupling to the transport system. The chain is Cytochrome c biogenesis ATP-binding export protein CcmA from Vibrio vulnificus (strain YJ016).